A 210-amino-acid chain; its full sequence is Redox-sensing transcriptional repressor Rex (210 aa).

Positions 17-56 form a DNA-binding region, H-T-H motif; that stretch reads KYYRYLAELMDNDVDRISSKELSEKIGFTASQIRQDLNNF. 91-96 provides a ligand contact to NAD(+); that stretch reads GAGNIG.

This sequence belongs to the transcriptional regulatory Rex family. As to quaternary structure, homodimer.

It is found in the cytoplasm. Functionally, modulates transcription in response to changes in cellular NADH/NAD(+) redox state. This Clostridium novyi (strain NT) protein is Redox-sensing transcriptional repressor Rex.